A 174-amino-acid chain; its full sequence is Pituitary tumor-transforming gene 1 protein-interacting protein (174 aa).

The signal sequence occupies residues 1 to 29 (MAPANLGLTPHWVMLLGAVLLLLLSGASA). The Extracellular segment spans residues 30-93 (QEPPRVGCSE…RWGVCWVNFE (64 aa)). Residues 36-89 (GCSEYTNRSCEECLRNVSCLWCNENKACMDYPVRKILPPASLCKLSSARWGVCW) form the PSI domain. Residues Asn-42 and Asn-51 are each glycosylated (N-linked (GlcNAc...) asparagine). A helical membrane pass occupies residues 94-114 (ALIITMSVLGGSVLLGITVCC). Residues 115-174 (CYCCRRKKSRKPDKSDERAMREQEERRVRQEERRAEMKSRHDEIRKKYGLFKEQNPYEKF) are Cytoplasmic-facing. The interval 125-155 (KPDKSDERAMREQEERRVRQEERRAEMKSRH) is disordered. The segment covering 126 to 155 (PDKSDERAMREQEERRVRQEERRAEMKSRH) has biased composition (basic and acidic residues). The stretch at 127–163 (DKSDERAMREQEERRVRQEERRAEMKSRHDEIRKKYG) forms a coiled coil. Tyr-171 carries the phosphotyrosine modification.

As to quaternary structure, interacts with PTTG1.

It is found in the cell membrane. The protein localises to the cytoplasm. It localises to the nucleus. In terms of biological role, may facilitate PTTG1 nuclear translocation. The chain is Pituitary tumor-transforming gene 1 protein-interacting protein (Pttg1ip) from Mus musculus (Mouse).